The following is a 439-amino-acid chain: Coiled-coil domain-containing protein 166 (439 aa).

The disordered stretch occupies residues 1–28 (MAPKKKRGPSAGSQPGGAAAAGAEQPLS). Residues 9–23 (PSAGSQPGGAAAAGA) show a composition bias toward low complexity. Coiled coils occupy residues 27-74 (LSER…EENR) and 121-213 (DGVR…VRAL). A disordered region spans residues 276-439 (PGGPPLWERP…AAAEASPGRA (164 aa)). Positions 338–365 (VLSSMDSRVPSLATSKVGSRMPSLTASR) are enriched in polar residues. 2 stretches are compositionally biased toward low complexity: residues 376–392 (SLEGSGISSGSSPRVSS) and 428–439 (AEAAAEASPGRA).

This chain is Coiled-coil domain-containing protein 166 (CCDC166), found in Homo sapiens (Human).